A 431-amino-acid polypeptide reads, in one-letter code: Putative F-box/FBD/LRR-repeat protein At4g26350 (431 aa).

The region spanning 1-47 is the F-box domain; sequence MDIISQCPDHLLLRILSFIPTKDVIVTSLLSKRWGSLWRWVPKLEYD. LRR repeat units follow at residues 52–78, 85–109, 132–159, 160–185, and 309–334; these read NMRFVKFVYRSLLQNNAPVLESLHLKN, CRTVDIGGWIDIAVSRRVRELEISI, ILTIKHCHLVDVPLAVCLPSLKKLHLRC, IGWAYNATLLRLISGCTNLEELRLAR, and CTQGWWDLLTHMLQGSPKLRFLTLTN. The FBD domain occupies 348–398; sequence CWKRPSSVPACLLSSLQAFTWSGYKGRQGDKEVVKYVLRNATGLKKRIFIS.

This chain is Putative F-box/FBD/LRR-repeat protein At4g26350, found in Arabidopsis thaliana (Mouse-ear cress).